We begin with the raw amino-acid sequence, 68 residues long: Ribosome modulation factor (68 aa).

This sequence belongs to the ribosome modulation factor family.

The protein resides in the cytoplasm. During stationary phase, converts 70S ribosomes to an inactive dimeric form (100S ribosomes). This is Ribosome modulation factor from Alcanivorax borkumensis (strain ATCC 700651 / DSM 11573 / NCIMB 13689 / SK2).